A 157-amino-acid polypeptide reads, in one-letter code: Transcription elongation factor GreA (157 aa).

The segment at 1–60 (MEKVPMTSAGFAALGEELKKRQSEDRPRIIEHIAEARSHGDLSENAEYHAAKEEQSHNEG) is disordered. The segment covering 16–60 (EELKKRQSEDRPRIIEHIAEARSHGDLSENAEYHAAKEEQSHNEG) has biased composition (basic and acidic residues). Residues 46–73 (AEYHAAKEEQSHNEGRIAELEDKLARAD) are a coiled coil.

Belongs to the GreA/GreB family.

Its function is as follows. Necessary for efficient RNA polymerase transcription elongation past template-encoded arresting sites. The arresting sites in DNA have the property of trapping a certain fraction of elongating RNA polymerases that pass through, resulting in locked ternary complexes. Cleavage of the nascent transcript by cleavage factors such as GreA or GreB allows the resumption of elongation from the new 3'terminus. GreA releases sequences of 2 to 3 nucleotides. The polypeptide is Transcription elongation factor GreA (Bradyrhizobium diazoefficiens (strain JCM 10833 / BCRC 13528 / IAM 13628 / NBRC 14792 / USDA 110)).